The sequence spans 706 residues: Zinc transporter foi (706 aa).

Positions 1 to 21 (MARHIMAVCVVCLLCAHRLHC) are cleaved as a signal peptide. Over 22 to 261 (QDHIESLLGP…EKDKDIFYVW (240 aa)) the chain is Extracellular. A compositionally biased stretch (polar residues) spans 40–56 (QDQLNARVYTNLSPSSE). The disordered stretch occupies residues 40-101 (QDQLNARVYT…HGPTSESRVP (62 aa)). N-linked (GlcNAc...) asparagine glycans are attached at residues N74, N119, N176, N182, N196, and N207. A helical transmembrane segment spans residues 262–282 (IYAFISVFACGILGLVGVAII). The Cytoplasmic segment spans residues 283–292 (PFMGSRYYKY). Residues 293 to 313 (IIQYLVALAVGTMTGDALLHL) traverse the membrane as a helical segment. Residues 314–329 (LPHSLAGQDERGMIMK) are Extracellular-facing. The chain crosses the membrane as a helical span at residues 330–350 (GLGCLGGIIFFYVMEHALTMI). The Cytoplasmic portion of the chain corresponds to 351-604 (SEWRKSVEKK…LIKAGMSVKS (254 aa)). A phosphoserine mark is found at S376, S377, and S381. A helical transmembrane segment spans residues 605–625 (AVYYNLLTGVLSFIGMIFGIA). The Extracellular portion of the chain corresponds to 626 to 631 (FGQSQD). The chain crosses the membrane as a helical span at residues 632-652 (VAQWMFAVAAGLFIYIALVDM). Topologically, residues 653–665 (MPEISASHKSLGQ) are cytoplasmic. The chain crosses the membrane as a helical span at residues 666–686 (FLLQILGMLSGVGIMLLIALY). Over 687-706 (EGDLMSAFGTAGAASHQHAH) the chain is Extracellular.

Belongs to the ZIP transporter (TC 2.A.5) family. In terms of processing, glycosylated. Maternal foi has almost completely disappeared by embryonic stage 3 except in the pole cells. In stage 6 embryos, expression is enriched in the invaginating mesoderm. In stage 9 embryos, high levels in the anterior and posterior midgut primordia. In stage 14 embryos, broad expression with low levels in the epidermis.

It localises to the cell membrane. Required for the normal migration of longitudinal and peripheral glial cells. During larval development, required for the migration of the subretinal glia into the eye disk. During embryonic development, also controls the migration of muscle cells toward their attachment sites. Required in the mesoderm for the correct morphogenesis of embryonic gonad and for tracheal branch fusion during tracheal development. Shg may be cooperating with foi to mediate a common mechanism for gonad and tracheal morphogenesis. Acts as a zinc transporter in both yeast and mammalian cells. The chain is Zinc transporter foi from Drosophila melanogaster (Fruit fly).